We begin with the raw amino-acid sequence, 327 residues long: Malate dehydrogenase (327 aa).

11–17 (GAAGQIS) is an NAD(+) binding site. Substrate-binding residues include Arg92 and Arg98. NAD(+) contacts are provided by residues Asn105, Gln112, and 129–131 (VGN). Asn131 and Arg162 together coordinate substrate. His187 (proton acceptor) is an active-site residue.

The protein belongs to the LDH/MDH superfamily. MDH type 2 family.

It carries out the reaction (S)-malate + NAD(+) = oxaloacetate + NADH + H(+). Catalyzes the reversible oxidation of malate to oxaloacetate. The polypeptide is Malate dehydrogenase (Cellvibrio japonicus (strain Ueda107) (Pseudomonas fluorescens subsp. cellulosa)).